The sequence spans 363 residues: Uroporphyrinogen decarboxylase (363 aa).

Residues 27-31, D77, Y157, T212, and H333 each bind substrate; that span reads RQAGR.

This sequence belongs to the uroporphyrinogen decarboxylase family. As to quaternary structure, homodimer.

The protein localises to the cytoplasm. The catalysed reaction is uroporphyrinogen III + 4 H(+) = coproporphyrinogen III + 4 CO2. It functions in the pathway porphyrin-containing compound metabolism; protoporphyrin-IX biosynthesis; coproporphyrinogen-III from 5-aminolevulinate: step 4/4. Catalyzes the decarboxylation of four acetate groups of uroporphyrinogen-III to yield coproporphyrinogen-III. The sequence is that of Uroporphyrinogen decarboxylase from Cupriavidus pinatubonensis (strain JMP 134 / LMG 1197) (Cupriavidus necator (strain JMP 134)).